The following is an 853-amino-acid chain: Replication protein A 70 kDa DNA-binding subunit C (853 aa).

Positions 118–282 are disordered; that stretch reads PKEPGHSSIN…QSAYQPQQPP (165 aa). Composition is skewed to polar residues over residues 124-144, 159-173, 180-194, 201-211, 222-249, and 263-278; these read SSINPQRGGVNTQSNGGSEQQ, SANSPQPQVVHNSSD, SANSPQPQVVHSSSD, SANSPQRQVVH, PQVSQRYGTGSGYPETSPSTRPYVSSNA, and TATTAYSRPVQSAYQP. The OB DNA-binding region spans 312 to 399; sequence WTIKVRVTSK…NDYEIHLDSA (88 aa). The segment at 602-628 adopts a C4-type zinc-finger fold; sequence CPIMNGDRPCSKKVTNNGDGTWRCEKC.

Belongs to the replication factor A protein 1 family. In terms of assembly, heterotrimer of RPA1, RPA2 and RPA3 (canonical replication protein A complex).

It localises to the nucleus. Its function is as follows. Component of the replication protein A complex (RPA) required for DNA recombination, repair and replication. The activity of RPA is mediated by single-stranded DNA binding and protein interactions. Probably involved in repair of double-strand DNA breaks (DSBs) induced by genotoxic stresses. The polypeptide is Replication protein A 70 kDa DNA-binding subunit C (RPA1C) (Arabidopsis thaliana (Mouse-ear cress)).